A 99-amino-acid polypeptide reads, in one-letter code: Protein translation factor SUI1 homolog (99 aa).

It belongs to the SUI1 family.

This is Protein translation factor SUI1 homolog from Picrophilus torridus (strain ATCC 700027 / DSM 9790 / JCM 10055 / NBRC 100828 / KAW 2/3).